The primary structure comprises 248 residues: Deoxyribose-phosphate aldolase (248 aa).

Asp106 functions as the Proton donor/acceptor in the catalytic mechanism. Lys168 serves as the catalytic Schiff-base intermediate with acetaldehyde. Lys197 functions as the Proton donor/acceptor in the catalytic mechanism.

The protein belongs to the DeoC/FbaB aldolase family. DeoC type 1 subfamily.

The protein localises to the cytoplasm. It carries out the reaction 2-deoxy-D-ribose 5-phosphate = D-glyceraldehyde 3-phosphate + acetaldehyde. It functions in the pathway carbohydrate degradation; 2-deoxy-D-ribose 1-phosphate degradation; D-glyceraldehyde 3-phosphate and acetaldehyde from 2-deoxy-alpha-D-ribose 1-phosphate: step 2/2. Functionally, catalyzes a reversible aldol reaction between acetaldehyde and D-glyceraldehyde 3-phosphate to generate 2-deoxy-D-ribose 5-phosphate. This Sinorhizobium medicae (strain WSM419) (Ensifer medicae) protein is Deoxyribose-phosphate aldolase.